Consider the following 131-residue polypeptide: MATKAKPAAASKKLCAEELIREFESAQQKTDLPEIYVGDTVRVGVRISEGNRERVQPYEGVVISKRHGGMNQTITVRRIFQGIGVERVFMVHSPQVANIKVERRGKVRRAKLFYLRERVGKATRVKQRFDR.

This sequence belongs to the bacterial ribosomal protein bL19 family.

Its function is as follows. This protein is located at the 30S-50S ribosomal subunit interface and may play a role in the structure and function of the aminoacyl-tRNA binding site. This chain is Large ribosomal subunit protein bL19, found in Synechococcus sp. (strain CC9902).